A 75-amino-acid chain; its full sequence is Sec-independent protein translocase protein TatA (75 aa).

Residues 1 to 21 (MGGISIWQLLIIVAIIVLLFG) traverse the membrane as a helical segment. The disordered stretch occupies residues 50-75 (DAEFKSLNKDESATAGSEKVKDKEQA).

Belongs to the TatA/E family. As to quaternary structure, the Tat system comprises two distinct complexes: a TatABC complex, containing multiple copies of TatA, TatB and TatC subunits, and a separate TatA complex, containing only TatA subunits. Substrates initially bind to the TatABC complex, which probably triggers association of the separate TatA complex to form the active translocon.

It localises to the cell inner membrane. Its function is as follows. Part of the twin-arginine translocation (Tat) system that transports large folded proteins containing a characteristic twin-arginine motif in their signal peptide across membranes. TatA could form the protein-conducting channel of the Tat system. In Mannheimia succiniciproducens (strain KCTC 0769BP / MBEL55E), this protein is Sec-independent protein translocase protein TatA.